The primary structure comprises 178 residues: DELTA-miturgitoxin-Cp3a (178 aa).

The signal sequence occupies residues 1 to 18 (MKALYLLGLLAFLYSCSS). Positions 19-46 (ENVYDLQPESSEEENPGTFLEAIQEQSR) are excised as a propeptide. The Processing quadruplet motif signature appears at 43–46 (EQSR). 8 disulfides stabilise this stretch: Cys48–Cys63, Cys55–Cys72, Cys62–Cys86, Cys74–Cys84, Cys113–Cys128, Cys120–Cys137, Cys127–Cys155, and Cys139–Cys153.

The protein belongs to the spider toxin CSTX family. Double-CSTX subfamily. Post-translationally, cleavage of the propeptide depends on the processing quadruplet motif (XXXR, with at least one of X being E). Expressed by the venom gland.

The protein resides in the secreted. Functionally, spider venom toxin that exhibits cytolytic activity by forming an alpha-helix across the membrane. Lethal to insect larvae. This chain is DELTA-miturgitoxin-Cp3a, found in Cheiracanthium punctorium (Yellow sac spider).